We begin with the raw amino-acid sequence, 203 residues long: Endo-type membrane-bound lytic murein transglycosylase A (203 aa).

A signal peptide spans 1–15 (MKLRWFAFLVVILAG). A lipid anchor (N-palmitoyl cysteine) is attached at C16. C16 is lipidated: S-diacylglycerol cysteine.

This sequence belongs to the transglycosylase Slt family.

It localises to the cell outer membrane. It catalyses the reaction Endolytic cleavage of the (1-&gt;4)-beta-glycosidic linkage between N-acetylmuramic acid (MurNAc) and N-acetylglucosamine (GlcNAc) residues in peptidoglycan with concomitant formation of a 1,6-anhydrobond in the MurNAc residue.. Its function is as follows. Murein-degrading enzyme. May play a role in recycling of muropeptides during cell elongation and/or cell division. Preferentially cleaves at a distance of more than two disaccharide units from the ends of the glycan chain. This chain is Endo-type membrane-bound lytic murein transglycosylase A, found in Salmonella paratyphi C (strain RKS4594).